Here is a 132-residue protein sequence, read N- to C-terminus: UPF0212 protein PYRAB08340 (132 aa).

Belongs to the UPF0212 family.

The polypeptide is UPF0212 protein PYRAB08340 (Pyrococcus abyssi (strain GE5 / Orsay)).